Reading from the N-terminus, the 110-residue chain is NADH dehydrogenase [ubiquinone] iron-sulfur protein 6, mitochondrial (110 aa).

A mitochondrion-targeting transit peptide spans 1 to 22; the sequence is MASNLLKALIRSQILPSSRRNF.

This sequence belongs to the complex I NDUFS6 subunit family. Complex I is composed of at least 49 different subunits. This is a component of the iron-sulfur (IP) fragment of the enzyme.

The protein localises to the mitochondrion inner membrane. Accessory subunit of the mitochondrial membrane respiratory chain NADH dehydrogenase (Complex I), that is believed not to be involved in catalysis. Complex I functions in the transfer of electrons from NADH to the respiratory chain. The immediate electron acceptor for the enzyme is believed to be ubiquinone. This is NADH dehydrogenase [ubiquinone] iron-sulfur protein 6, mitochondrial from Arabidopsis thaliana (Mouse-ear cress).